The chain runs to 3034 residues: Cadherin EGF LAG seven-pass G-type receptor 1 (3034 aa).

The signal sequence occupies residues 1–29 (MAPSSPRVLPALVLLAAAALPALELGAAA). Residues 30–2484 (WELRVPGGAR…REHGEVLPLK (2455 aa)) lie on the Extracellular side of the membrane. Over residues 222–243 (GTPSESPSVSPSLLNLSQPRAG) the composition is skewed to low complexity. The disordered stretch occupies residues 222 to 267 (GTPSESPSVSPSLLNLSQPRAGVVRRSRRGTGSSTSPQFPLPSYQV). Asn-236 is a glycosylation site (N-linked (GlcNAc...) asparagine). Cadherin domains are found at residues 261–368 (PLPS…SPVF), 369–474 (EQSE…YPQF), 475–580 (SEKR…APIF), 581–702 (VSSP…DPMF), 703–804 (TQPV…RPVF), 805–907 (QSSH…APRF), 908–1014 (LRDF…PPVF), 1015–1116 (EKDE…PPEL), and 1121–1239 (ILFN…SPLL). 3 N-linked (GlcNAc...) asparagine glycosylation sites follow: Asn-561, Asn-649, and Asn-793. Residues Asn-1129, Asn-1154, Asn-1228, Asn-1264, Asn-1274, and Asn-1302 are each glycosylated (N-linked (GlcNAc...) asparagine). An EGF-like 1; calcium-binding domain is found at 1318 to 1376 (DDNICLREPCENYMKCVSVLRFDSSAPFISSTTVLFRPIHPITGLRCRCPPGFTGDYCE). 9 disulfide bridges follow: Cys-1322–Cys-1333, Cys-1327–Cys-1364, Cys-1366–Cys-1375, Cys-1382–Cys-1393, Cys-1387–Cys-1402, Cys-1404–Cys-1413, Cys-1422–Cys-1433, Cys-1427–Cys-1443, and Cys-1445–Cys-1455. The 37-residue stretch at 1378 to 1414 (EIDLCYSNPCGANGRCRSREGGYTCECFEDFTGEHCQ) folds into the EGF-like 2; calcium-binding domain. In terms of domain architecture, EGF-like 3; calcium-binding spans 1418–1456 (RSGRCASGVCKNGGTCVNLLIGGFHCVCPPGEYEHPYCE). Residues 1457–1661 (VSTRSFPPQS…IANNGTRAGC (205 aa)) form the Laminin G-like 1 domain. Asn-1591, Asn-1638, and Asn-1655 each carry an N-linked (GlcNAc...) asparagine glycan. Cystine bridges form between Cys-1635–Cys-1661, Cys-1668–Cys-1679, Cys-1673–Cys-1688, Cys-1690–Cys-1699, Cys-1855–Cys-1885, Cys-1891–Cys-1902, Cys-1896–Cys-1911, Cys-1913–Cys-1922, Cys-1926–Cys-1937, Cys-1931–Cys-1949, Cys-1951–Cys-1960, Cys-1968–Cys-1981, and Cys-1983–Cys-1993. One can recognise an EGF-like 4; calcium-binding domain in the interval 1664–1700 (QRNFCDGTSCQNGGTCVNRWNTYLCECPLRFGGKNCE). Asn-1681 is modified ((3R)-3-hydroxyasparagine). Residues 1704 to 1885 (PHPQRFTGES…ALKVRVKDGC (182 aa)) form the Laminin G-like 2 domain. In terms of domain architecture, EGF-like 5; calcium-binding spans 1887-1922 (VEDPCASSPCPPHSHCRDTWDSYSCICDRGYFGKKC). Asp-1904 carries the post-translational modification (3R)-3-hydroxyaspartate. The region spanning 1923 to 1961 (VDACLLNPCKHVAACVRSPNTPRGYSCECGPGHYGQYCE) is the EGF-like 6; calcium-binding domain. The EGF-like 7; calcium-binding domain maps to 1962–1994 (NKVDLPCPKGWWGNPVCGPCHCAVSQGFDPDCN). The N-linked (GlcNAc...) asparagine glycan is linked to Asn-1994. The region spanning 1996 to 2031 (TNGQCQCKENYYKPPAQDACLPCDCFPHGSHSRACD) is the EGF-like 8; calcium-binding domain. 5 disulfide bridges follow: Cys-2000–Cys-2015, Cys-2002–Cys-2018, Cys-2020–Cys-2030, Cys-2039–Cys-2048, and Cys-2051–Cys-2063. The 48-residue stretch at 2018–2065 (CDCFPHGSHSRACDMDTGQCACKPGVIGRQCNRCDNPFAEVTSLGCEV) folds into the Laminin EGF-like domain. N-linked (GlcNAc...) asparagine glycosylation is found at Asn-2118, Asn-2137, Asn-2144, Asn-2155, Asn-2160, and Asn-2272. The tract at residues 2295-2346 (SVSFPADTFKPPEKKEGPVVRLTNRRTTPLTAQPEPRAERETSSSRRRRHPD) is disordered. The GAIN-B domain occupies 2312–2476 (PVVRLTNRRT…AVLMDISRRE (165 aa)). Intrachain disulfides connect Cys-2426-Cys-2458 and Cys-2446-Cys-2460. Positions 2426 to 2476 (CVFWNHSLDTGGTGGWSAKGCELLSRNRTHVTCQCSHSASCAVLMDISRRE) are GPS. 2 N-linked (GlcNAc...) asparagine glycosylation sites follow: Asn-2430 and Asn-2452. The chain crosses the membrane as a helical span at residues 2485–2505 (IITYAALSLSLVALLVAFVLL). Residues 2506 to 2516 (SLVRTLRSNLH) lie on the Cytoplasmic side of the membrane. The helical transmembrane segment at 2517 to 2537 (SIHKNLITALFFSQLIFMVGI) threads the bilayer. Asn-2538 carries N-linked (GlcNAc...) asparagine glycosylation. Residues 2538 to 2542 (NQTEN) are Extracellular-facing. A helical membrane pass occupies residues 2543-2563 (PFLCTVVAILLHYVSMGTFAW). At 2564 to 2587 (TLVENLHVYRMLTEVRNIDTGPMR) the chain is on the cytoplasmic side. The chain crosses the membrane as a helical span at residues 2588–2608 (FYHVVGWGIPAIVTGLAVGLD). Residues 2609 to 2625 (PQGYGNPDFCWLSLQDT) are Extracellular-facing. The chain crosses the membrane as a helical span at residues 2626 to 2646 (LIWSFAGPVGTVIIINTVIFV). The Cytoplasmic segment spans residues 2647–2670 (LSAKVSCQRKHHYYERKGVVSMLR). A helical transmembrane segment spans residues 2671 to 2691 (TAFLLLLLVTATWLLGLLAVN). Residues 2692-2694 (SDT) are Extracellular-facing. Residues 2695 to 2715 (LSFHYLFAAFSCLQGIFVLLF) form a helical membrane-spanning segment. Over 2716–3034 (HCVAHREVRK…QANGSDSEKP (319 aa)) the chain is Cytoplasmic. A disordered region spans residues 2774 to 3034 (TASLDSTTRD…QANGSDSEKP (261 aa)). Residues Ser-2776, Ser-2779, Ser-2886, and Ser-2888 each carry the phosphoserine modification. Over residues 2893 to 2909 (TEPHLKVETKVSVELHR) the composition is skewed to basic and acidic residues. Residues 2976-2986 (SPTSSRTSSLG) are compositionally biased toward low complexity. Over residues 3003 to 3012 (PRREPGREHL) the composition is skewed to basic and acidic residues. Residues 3020 to 3034 (RTGSAQANGSDSEKP) are compositionally biased toward polar residues.

It belongs to the G-protein coupled receptor 2 family. LN-TM7 subfamily. The iron and 2-oxoglutarate dependent 3-hydroxylation of aspartate and asparagine is (R) stereospecific within EGF domains. In terms of tissue distribution, expressed in the brain, where it is localized principally in the ependymal cell layer, choroid plexus and the area postrema. Also found in spinal cord and in the eye.

It is found in the cell membrane. Receptor that may have an important role in cell/cell signaling during nervous system formation. The sequence is that of Cadherin EGF LAG seven-pass G-type receptor 1 (Celsr1) from Mus musculus (Mouse).